A 298-amino-acid chain; its full sequence is ATP synthase gamma chain (298 aa).

The protein belongs to the ATPase gamma chain family. In terms of assembly, F-type ATPases have 2 components, CF(1) - the catalytic core - and CF(0) - the membrane proton channel. CF(1) has five subunits: alpha(3), beta(3), gamma(1), delta(1), epsilon(1). CF(0) has three main subunits: a, b and c.

It is found in the cell inner membrane. Functionally, produces ATP from ADP in the presence of a proton gradient across the membrane. The gamma chain is believed to be important in regulating ATPase activity and the flow of protons through the CF(0) complex. This Desulfosudis oleivorans (strain DSM 6200 / JCM 39069 / Hxd3) (Desulfococcus oleovorans) protein is ATP synthase gamma chain.